Here is a 488-residue protein sequence, read N- to C-terminus: Glutamyl-tRNA(Gln) amidotransferase subunit A (488 aa).

Catalysis depends on charge relay system residues lysine 77 and serine 152. Serine 176 serves as the catalytic Acyl-ester intermediate.

It belongs to the amidase family. GatA subfamily. Heterotrimer of A, B and C subunits.

The catalysed reaction is L-glutamyl-tRNA(Gln) + L-glutamine + ATP + H2O = L-glutaminyl-tRNA(Gln) + L-glutamate + ADP + phosphate + H(+). Its function is as follows. Allows the formation of correctly charged Gln-tRNA(Gln) through the transamidation of misacylated Glu-tRNA(Gln) in organisms which lack glutaminyl-tRNA synthetase. The reaction takes place in the presence of glutamine and ATP through an activated gamma-phospho-Glu-tRNA(Gln). The protein is Glutamyl-tRNA(Gln) amidotransferase subunit A of Streptococcus pyogenes serotype M4 (strain MGAS10750).